Here is a 530-residue protein sequence, read N- to C-terminus: Phosphoenolpyruvate carboxykinase (ATP) (530 aa).

R58, Y195, and K201 together coordinate substrate. ATP-binding positions include K201, H220, and 236–244 (GLSGTGKTT). K201 and H220 together coordinate Mn(2+). D257 provides a ligand contact to Mn(2+). ATP contacts are provided by residues E285, R321, 440-441 (RI), and T446. R321 lines the substrate pocket.

The protein belongs to the phosphoenolpyruvate carboxykinase (ATP) family. Requires Mn(2+) as cofactor.

The protein localises to the cytoplasm. The catalysed reaction is oxaloacetate + ATP = phosphoenolpyruvate + ADP + CO2. It functions in the pathway carbohydrate biosynthesis; gluconeogenesis. Functionally, involved in the gluconeogenesis. Catalyzes the conversion of oxaloacetate (OAA) to phosphoenolpyruvate (PEP) through direct phosphoryl transfer between the nucleoside triphosphate and OAA. The chain is Phosphoenolpyruvate carboxykinase (ATP) from Staphylococcus epidermidis (strain ATCC 12228 / FDA PCI 1200).